Here is a 30-residue protein sequence, read N- to C-terminus: Cycloviolacin-O4 (30 aa).

The segment at residues 1–30 (GIPCGESCVWIPCISSAIGCSCKNKVCYRN) is a cross-link (cyclopeptide (Gly-Asn)). 3 cysteine pairs are disulfide-bonded: Cys4/Cys20, Cys8/Cys22, and Cys13/Cys27.

In terms of processing, this is a cyclic peptide. In terms of tissue distribution, expressed in petals, petioles, roots and runners but not in leaves (at protein level).

Probably participates in a plant defense mechanism. This chain is Cycloviolacin-O4, found in Viola odorata (Sweet violet).